A 142-amino-acid polypeptide reads, in one-letter code: Large ribosomal subunit protein uL13 (142 aa).

It belongs to the universal ribosomal protein uL13 family. In terms of assembly, part of the 50S ribosomal subunit.

This protein is one of the early assembly proteins of the 50S ribosomal subunit, although it is not seen to bind rRNA by itself. It is important during the early stages of 50S assembly. The sequence is that of Large ribosomal subunit protein uL13 from Cupriavidus metallidurans (strain ATCC 43123 / DSM 2839 / NBRC 102507 / CH34) (Ralstonia metallidurans).